Consider the following 91-residue polypeptide: Small ribosomal subunit protein uS17 (91 aa).

The protein belongs to the universal ribosomal protein uS17 family. In terms of assembly, part of the 30S ribosomal subunit.

One of the primary rRNA binding proteins, it binds specifically to the 5'-end of 16S ribosomal RNA. This is Small ribosomal subunit protein uS17 from Salinispora arenicola (strain CNS-205).